We begin with the raw amino-acid sequence, 592 residues long: Beta-xylosidase (592 aa).

Residues 1–19 form the signal peptide; it reads MYLNACRALTLISVLSLLA. A lipid anchor (N-palmitoyl cysteine) is attached at Cys-20. The S-diacylglycerol cysteine moiety is linked to residue Cys-20.

It belongs to the glycosyl hydrolase 43 family.

It is found in the cell outer membrane. Functionally, xylosidase involved in ulvan degradation. Ulvan is the main polysaccharide component of the Ulvales (green seaweed) cell wall. It is composed of disaccharide building blocks comprising 3-sulfated rhamnose (Rha3S) linked to D-glucuronic acid (GlcA), L-iduronic acid (IduA), or D-xylose (Xyl). Beta-xylosidase converts Xyl-Rha3S, a product of alpha-L-rhamnosidase acting on Rha-Xyl-Rha3S oligosaccharides, further to Xyl and Rha3S. This is Beta-xylosidase from Formosa agariphila (strain DSM 15362 / KCTC 12365 / LMG 23005 / KMM 3901 / M-2Alg 35-1).